Consider the following 173-residue polypeptide: Co-chaperone protein HscB homolog (173 aa).

Residues 5-77 form the J domain; that stretch reads CHFAQFDLQP…PRRALYLLTL (73 aa).

This sequence belongs to the HscB family. As to quaternary structure, interacts with HscA and stimulates its ATPase activity.

Its function is as follows. Co-chaperone involved in the maturation of iron-sulfur cluster-containing proteins. Seems to help targeting proteins to be folded toward HscA. In Pseudomonas aeruginosa (strain UCBPP-PA14), this protein is Co-chaperone protein HscB homolog.